A 436-amino-acid polypeptide reads, in one-letter code: Serine--tRNA ligase (436 aa).

Positions Thr-43–Val-55 are enriched in basic and acidic residues. Residues Thr-43 to Asp-68 are disordered. Thr-237–Glu-239 contributes to the L-serine binding site. An ATP-binding site is contributed by Arg-268–Glu-270. Position 291 (Glu-291) interacts with L-serine. Glu-355–Ser-358 contacts ATP. Ser-390 serves as a coordination point for L-serine.

The protein belongs to the class-II aminoacyl-tRNA synthetase family. Type-1 seryl-tRNA synthetase subfamily. As to quaternary structure, homodimer. The tRNA molecule binds across the dimer.

It is found in the cytoplasm. The enzyme catalyses tRNA(Ser) + L-serine + ATP = L-seryl-tRNA(Ser) + AMP + diphosphate + H(+). It catalyses the reaction tRNA(Sec) + L-serine + ATP = L-seryl-tRNA(Sec) + AMP + diphosphate + H(+). The protein operates within aminoacyl-tRNA biosynthesis; selenocysteinyl-tRNA(Sec) biosynthesis; L-seryl-tRNA(Sec) from L-serine and tRNA(Sec): step 1/1. Its function is as follows. Catalyzes the attachment of serine to tRNA(Ser). Is also able to aminoacylate tRNA(Sec) with serine, to form the misacylated tRNA L-seryl-tRNA(Sec), which will be further converted into selenocysteinyl-tRNA(Sec). The polypeptide is Serine--tRNA ligase (Lactobacillus johnsonii (strain CNCM I-12250 / La1 / NCC 533)).